The primary structure comprises 1295 residues: Protein FORGETTER 1 (1295 aa).

Pro residues-rich tracts occupy residues 1–14 (MTQSPVQPPPPLPA), 75–89 (PQQPPQPIQTLPPPI), and 162–177 (PPTPAAPTVPPPPPPE). 4 disordered regions span residues 1-20 (MTQSPVQPPPPLPAQPHSAA), 68-107 (RPQFPQSPQQPPQPIQTLPPPIQQQLKPLNLPRPPVPAHG), 153-204 (LTAS…MDYR), and 626-688 (PEQP…NDSD). The span at 178–193 (EVNEEAIEVEREEDEG) shows a compositional bias: acidic residues. Positions 643 to 650 (RKRHSASP) match the Nuclear localization signal motif. The span at 669-688 (DNESDLESEADSADDSNDSD) shows a compositional bias: acidic residues. A PHD-type zinc finger spans residues 691-741 (FQICQICSGEDERKKLLHCSECDKLFHPDCVVPPVIDLPSEAWICFSCKEK).

The protein belongs to the SBNO family. Interacts with SWI/SNF and ISWI chromatin remodelers such as BRM, CHR11 and CHR17. Binds to histone H3.

It localises to the nucleus. Required for normal embryo development. Necessary to acquire heat stress (HS) memory, by modulating nucleosome occupancy and regulating heat-induced gene expression. Associates globally with the nucleosome-poor regions flanking the transcription units of expressed genes. Binds to the promoter regions, primarily to the proximal promoter just upstream of the transcriptional start sites (TSS) and somewhat more weakly to the region downstream of the transcription termination site (TTS), of actively expressed genes (e.g. HSA32, HSP18.2 and HSP22.0) in a heat-dependent fashion. The protein is Protein FORGETTER 1 of Arabidopsis thaliana (Mouse-ear cress).